A 953-amino-acid polypeptide reads, in one-letter code: Catenin alpha-2 (953 aa).

T632 carries the phosphothreonine modification. Residues S640, S651, and S901 each carry the phosphoserine modification. Residues 912-927 (EKKPLVKREKPEEFQT) are compositionally biased toward basic and acidic residues. The disordered stretch occupies residues 912–939 (EKKPLVKREKPEEFQTRVRRGSQKKHIS). The span at 928-938 (RVRRGSQKKHI) shows a compositional bias: basic residues. The residue at position 939 (S939) is a Phosphoserine.

It belongs to the vinculin/alpha-catenin family. Interacts with CDH1 and CDH2. Interacts with ZNF639; recruits CTNNA2 to the nucleus. Interacts with F-actin. Expressed almost exclusively in the nervous system.

It localises to the cell membrane. The protein resides in the cytoplasm. Its subcellular location is the cytoskeleton. The protein localises to the cell junction. It is found in the adherens junction. It localises to the cell projection. The protein resides in the axon. Its subcellular location is the nucleus. Functionally, may function as a linker between cadherin adhesion receptors and the cytoskeleton to regulate cell-cell adhesion and differentiation in the nervous system. Required for proper regulation of cortical neuronal migration and neurite growth. It acts as a negative regulator of Arp2/3 complex activity and Arp2/3-mediated actin polymerization. It thereby suppresses excessive actin branching which would impair neurite growth and stability. Regulates morphological plasticity of synapses and cerebellar and hippocampal lamination during development. Functions in the control of startle modulation. The protein is Catenin alpha-2 (Ctnna2) of Mus musculus (Mouse).